Here is a 340-residue protein sequence, read N- to C-terminus: Hyaluronan and proteoglycan link protein 2 (340 aa).

Positions 1–26 (MPGWLTLPTLCRFLLWAFTIFHKAQG) are cleaved as a signal peptide. The Ig-like V-type domain occupies 34-144 (PHYLLPPIHE…EDESVALTLS (111 aa)). 5 disulfide bridges follow: C57-C128, C170-C240, C194-C215, C265-C336, and C290-C311. Link domains lie at 148–242 (VVFP…FCFT) and 245–338 (LAGQ…YCYA).

Belongs to the HAPLN family. Expressed only in adult brain.

Its subcellular location is the secreted. The protein localises to the extracellular space. The protein resides in the extracellular matrix. Its function is as follows. Mediates a firm binding of versican V2 to hyaluronic acid. May play a pivotal role in the formation of the hyaluronan-associated matrix in the central nervous system (CNS) which facilitates neuronal conduction and general structural stabilization. Binds to hyaluronic acid. This chain is Hyaluronan and proteoglycan link protein 2 (HAPLN2), found in Homo sapiens (Human).